We begin with the raw amino-acid sequence, 104 residues long: Urease subunit beta (104 aa).

Belongs to the urease beta subunit family. Heterotrimer of UreA (gamma), UreB (beta) and UreC (alpha) subunits. Three heterotrimers associate to form the active enzyme.

Its subcellular location is the cytoplasm. It catalyses the reaction urea + 2 H2O + H(+) = hydrogencarbonate + 2 NH4(+). It functions in the pathway nitrogen metabolism; urea degradation; CO(2) and NH(3) from urea (urease route): step 1/1. This chain is Urease subunit beta, found in Rhodococcus jostii (strain RHA1).